The primary structure comprises 430 residues: Potassium channel subfamily K member 12 (430 aa).

The Cytoplasmic segment spans residues 1–38 (MSSRSPRPPPRRSRRRLPRPSCCCCCCRRSHLNEDTGR). An ER retention/retrieval signal region spans residues 11–16 (RRSRRR). Residues 39-59 (FVLLAALIGLYLVAGATVFSA) traverse the membrane as a helical segment. The N-linked (GlcNAc...) asparagine glycan is linked to Asn-78. Residues 114–134 (WDFPGAFYFVGTVVSTIGFGM) constitute an intramembrane region (pore-forming). Positions 129, 130, and 131 each coordinate K(+). The selectivity filter 1 stretch occupies residues 129 to 134 (TIGFGM). Residues 145–165 (FLIAYGLFGCAGTILFFNLFL) form a helical membrane-spanning segment. At 166 to 212 (ERIISLLAFIMRACRERQLRRSGLLPATFRRGSALSEADSLAGWKPS) the chain is on the cytoplasmic side. Residues 213-233 (VYHVLLILGLFAVLLSCCASA) traverse the membrane as a helical segment. Positions 243–263 (YVDSLYFCFVTFSTIGFGDLV) form an intramembrane region, pore-forming. Residues Thr-256, Ile-257, Gly-258, and Phe-259 each contribute to the K(+) site. The interval 256–261 (TIGFGD) is selectivity filter 2. A helical membrane pass occupies residues 282–302 (LFILLGVCCIYSLFNVISILI). Over 303-430 (KQVLNWMLRK…NRLAETSASR (128 aa)) the chain is Cytoplasmic.

This sequence belongs to the two pore domain potassium channel (TC 1.A.1.8) family. As to quaternary structure, homodimer. Heterodimer with KCNK13.

Its subcellular location is the cell membrane. It localises to the endoplasmic reticulum membrane. It catalyses the reaction K(+)(in) = K(+)(out). Functionally, k(+) channel subunit that may homo- and heterodimerize to form functional channels with distinct regulatory and gating properties. Can heterodimerize with KCNK13 subunit to conduct K(+) outward rectifying currents at the plasma membrane. The homodimers are mainly retained in the endoplasmic reticulum compartment and may be targeted to the cell surface upon phosphorylation or other activation signals yet to be elucidated. In Homo sapiens (Human), this protein is Potassium channel subfamily K member 12.